The following is a 748-amino-acid chain: 5-methyltetrahydropteroyltriglutamate--homocysteine methyltransferase (748 aa).

Position 111 (K111) interacts with 5-methyltetrahydropteroyltri-L-glutamate. L-homocysteine-binding positions include 428–430 and E478; that span reads IGS. L-methionine-binding positions include 428-430 and E478; that span reads IGS. 5-methyltetrahydropteroyltri-L-glutamate-binding positions include 509 to 510 and W555; that span reads RC. D593 contacts L-homocysteine. D593 contributes to the L-methionine binding site. E599 is a 5-methyltetrahydropteroyltri-L-glutamate binding site. Residues H635, C637, and E659 each contribute to the Zn(2+) site. The active-site Proton donor is H687. C719 is a Zn(2+) binding site.

This sequence belongs to the vitamin-B12 independent methionine synthase family. Requires Zn(2+) as cofactor.

The catalysed reaction is 5-methyltetrahydropteroyltri-L-glutamate + L-homocysteine = tetrahydropteroyltri-L-glutamate + L-methionine. It participates in amino-acid biosynthesis; L-methionine biosynthesis via de novo pathway; L-methionine from L-homocysteine (MetE route): step 1/1. Its function is as follows. Catalyzes the transfer of a methyl group from 5-methyltetrahydrofolate to homocysteine resulting in methionine formation. This is 5-methyltetrahydropteroyltriglutamate--homocysteine methyltransferase from Herpetosiphon aurantiacus (strain ATCC 23779 / DSM 785 / 114-95).